A 315-amino-acid polypeptide reads, in one-letter code: Secreted mono- and diacylglycerol lipase LIP2 (315 aa).

Positions 1–21 (MACFRVILYLSVIFFVQCVFA) are cleaved as a signal peptide. A disulfide bond links cysteine 68 and cysteine 308. Asparagine 74 carries N-linked (GlcNAc...) asparagine glycosylation. Catalysis depends on serine 182, which acts as the Nucleophile. Aspartate 240 is a catalytic residue. Asparagine 265 is a glycosylation site (N-linked (GlcNAc...) asparagine). Residue histidine 292 is part of the active site.

This sequence belongs to the AB hydrolase superfamily. Lipase family. Class 3 subfamily.

It is found in the secreted. It catalyses the reaction a monoacylglycerol + H2O = glycerol + a fatty acid + H(+). It carries out the reaction a diacylglycerol + H2O = a monoacylglycerol + a fatty acid + H(+). Its function is as follows. Secreted lipase involved in Dandruff and seborrheic dermatitis (D/SD) probably via lipase-mediated breakdown of sebaceous lipids and release of irritating free fatty acids. Shows activity against monoglyceride and diglyceride substrates and generates free oleic acid from the substrates mono- and diolein. Able to cleave the oleic acid from both the 1 and the 2 position of the glycerol backbone as 1,2 isomers of diolein were converted into oleic acid and glycerol. Due to an absence of fatty acid synthase genes in Malassezia species, secretory lipases are essential for the yeast to generate free fatty acids from degradation of sebum and assimilate them as lipid sources for growth. Plays an essential role at the pathogen-host interface during disease progression. Also performs the reverse reaction to build diacylglycerols from monoacylglycerols. This chain is Secreted mono- and diacylglycerol lipase LIP2, found in Malassezia restricta (Seborrheic dermatitis infection agent).